Consider the following 560-residue polypeptide: Oxygen-dependent choline dehydrogenase 1 (560 aa).

8–37 (DYIIIGAGSAGNVLATRLTEDPDVQVLLLE) lines the FAD pocket. Catalysis depends on His-475, which acts as the Proton acceptor.

It belongs to the GMC oxidoreductase family. FAD is required as a cofactor.

The enzyme catalyses choline + A = betaine aldehyde + AH2. The catalysed reaction is betaine aldehyde + NAD(+) + H2O = glycine betaine + NADH + 2 H(+). It functions in the pathway amine and polyamine biosynthesis; betaine biosynthesis via choline pathway; betaine aldehyde from choline (cytochrome c reductase route): step 1/1. Involved in the biosynthesis of the osmoprotectant glycine betaine. Catalyzes the oxidation of choline to betaine aldehyde and betaine aldehyde to glycine betaine at the same rate. This chain is Oxygen-dependent choline dehydrogenase 1, found in Chromohalobacter salexigens (strain ATCC BAA-138 / DSM 3043 / CIP 106854 / NCIMB 13768 / 1H11).